Consider the following 325-residue polypeptide: Quinone oxidoreductase (325 aa).

It belongs to the zinc-containing alcohol dehydrogenase family. Quinone oxidoreductase subfamily.

The enzyme catalyses 2 a quinone + NADPH + H(+) = 2 a 1,4-benzosemiquinone + NADP(+). The sequence is that of Quinone oxidoreductase (qor) from Pseudomonas aeruginosa (strain ATCC 15692 / DSM 22644 / CIP 104116 / JCM 14847 / LMG 12228 / 1C / PRS 101 / PAO1).